A 65-amino-acid chain; its full sequence is Large ribosomal subunit protein bL35 (65 aa).

Belongs to the bacterial ribosomal protein bL35 family.

This chain is Large ribosomal subunit protein bL35, found in Acaryochloris marina (strain MBIC 11017).